The sequence spans 401 residues: Nicotinate phosphoribosyltransferase (401 aa).

H221 is modified (phosphohistidine; by autocatalysis).

This sequence belongs to the NAPRTase family. In terms of processing, transiently phosphorylated on a His residue during the reaction cycle. Phosphorylation strongly increases the affinity for substrates and increases the rate of nicotinate D-ribonucleotide production. Dephosphorylation regenerates the low-affinity form of the enzyme, leading to product release.

The catalysed reaction is nicotinate + 5-phospho-alpha-D-ribose 1-diphosphate + ATP + H2O = nicotinate beta-D-ribonucleotide + ADP + phosphate + diphosphate. It functions in the pathway cofactor biosynthesis; NAD(+) biosynthesis; nicotinate D-ribonucleotide from nicotinate: step 1/1. In terms of biological role, catalyzes the synthesis of beta-nicotinate D-ribonucleotide from nicotinate and 5-phospho-D-ribose 1-phosphate at the expense of ATP. The protein is Nicotinate phosphoribosyltransferase of Yersinia pseudotuberculosis serotype O:1b (strain IP 31758).